Consider the following 543-residue polypeptide: Ipecac alkaloid beta-glucosidase 3 (543 aa).

Residues Gln36, His140, 185–186, Tyr350, Glu422, Trp471, and Phe487 each bind a beta-D-glucoside; that span reads NE. Residue Glu186 is the Proton donor of the active site. Residue Glu422 is the Nucleophile of the active site.

Belongs to the glycosyl hydrolase 1 family.

Its subcellular location is the cytoplasm. It localises to the cytosol. The enzyme catalyses deacetylipecoside + H2O = deacetylipecoside aglycone + D-glucose. It carries out the reaction deacetylisoipecoside + H2O = deacetylisoipecoside aglycone + D-glucose. The protein operates within alkaloid biosynthesis. In terms of biological role, beta-glucosidase catalyzing deglucosylation on N-deacetylisoipecoside and N-deacetylipecoside. This is Ipecac alkaloid beta-glucosidase 3 from Carapichea ipecacuanha (Ipecac).